Here is a 361-residue protein sequence, read N- to C-terminus: tRNA-specific 2-thiouridylase MnmA (361 aa).

Residues G8–S15 and M34 contribute to the ATP site. The tract at residues N94–D96 is interaction with target base in tRNA. C99 functions as the Nucleophile in the catalytic mechanism. C99 and C195 are disulfide-bonded. Residue G123 participates in ATP binding. Residues K145–Q147 are interaction with tRNA. C195 (cysteine persulfide intermediate) is an active-site residue. The interaction with tRNA stretch occupies residues R307–Y308.

The protein belongs to the MnmA/TRMU family.

The protein resides in the cytoplasm. The catalysed reaction is S-sulfanyl-L-cysteinyl-[protein] + uridine(34) in tRNA + AH2 + ATP = 2-thiouridine(34) in tRNA + L-cysteinyl-[protein] + A + AMP + diphosphate + H(+). Catalyzes the 2-thiolation of uridine at the wobble position (U34) of tRNA, leading to the formation of s(2)U34. This Legionella pneumophila subsp. pneumophila (strain Philadelphia 1 / ATCC 33152 / DSM 7513) protein is tRNA-specific 2-thiouridylase MnmA.